The primary structure comprises 1935 residues: Myosin-7 (1935 aa).

The region spanning 32–81 is the Myosin N-terminal SH3-like domain; the sequence is DLKKDVFVPDDKEEFVKATILSREGGKVTAETEHGKTVTVKEDQVLQQNP. The Myosin motor domain maps to 85-778; the sequence is DKIEDMAMLT…LLGLLEEMRD (694 aa). The residue at position 129 (K129) is an N6,N6,N6-trimethyllysine. 178 to 185 is an ATP binding site; sequence GESGAGKT. T378 is subject to Phosphothreonine. 2 actin-binding regions span residues 655-677 and 757-771; these read LNKL…IPNE and KFGH…GLLG. The 30-residue stretch at 781–810 folds into the IQ domain; that stretch reads LSRIITRIQAQSRGVLSRMEFKKLLERRDS. Residues 839 to 1935 are a coiled coil; the sequence is LLKSAETEKE…DIGTKGLNEE (1097 aa). S1137 and S1269 each carry phosphoserine. A Phosphothreonine modification is found at T1282. Residue Y1308 is modified to Phosphotyrosine. At T1309 the chain carries Phosphothreonine. S1510 carries the phosphoserine modification. Residue T1513 is modified to Phosphothreonine. The segment at 1907–1935 is disordered; that stretch reads EERADIAESQVNKLRAKSRDIGTKGLNEE. Over residues 1923 to 1935 the composition is skewed to basic and acidic residues; it reads KSRDIGTKGLNEE.

This sequence belongs to the TRAFAC class myosin-kinesin ATPase superfamily. Myosin family. As to quaternary structure, muscle myosin is a hexameric protein that consists of 2 heavy chain subunits (MHC), 2 alkali light chain subunits (MLC) and 2 regulatory light chain subunits (MLC-2). Interacts with ECPAS. Interacts (via C-terminus) with LRRC39.

It localises to the cytoplasm. The protein resides in the myofibril. Its subcellular location is the sarcomere. Its function is as follows. Myosins are actin-based motor molecules with ATPase activity essential for muscle contraction. Forms regular bipolar thick filaments that, together with actin thin filaments, constitute the fundamental contractile unit of skeletal and cardiac muscle. The protein is Myosin-7 (MYH7) of Bos taurus (Bovine).